Reading from the N-terminus, the 1784-residue chain is Sodium channel protein type 4 subunit alpha B (1784 aa).

The Cytoplasmic portion of the chain corresponds to 1–130 (MARLLPPTGT…RAAIRILIHS (130 aa)). A disordered region spans residues 29–48 (AEEAAEQERMKEQNVKVAEE). The stretch at 112–429 (CLSPFNPVRR…VVAMAYAEQN (318 aa)) is one I repeat. A helical transmembrane segment spans residues 131 to 149 (LFSLVIMLTILTNCVFMAM). Topologically, residues 150–156 (SDPPGWS) are extracellular. A helical transmembrane segment spans residues 157–177 (KILEYVFTGIYTFEAMVKVLS). Over 178–191 (RGFCIGDFTFLRDP) the chain is Cytoplasmic. A helical transmembrane segment spans residues 192–209 (WNWLDFMVISMAYLTEFV). Over 210-215 (DLGNIS) the chain is Extracellular. Asn213 is a glycosylation site (N-linked (GlcNAc...) asparagine). The helical transmembrane segment at 216–232 (ALRTFRVLRALKTITVI) threads the bilayer. Residues 233–251 (PGLKTIVGALIQSVKKLAD) are Cytoplasmic-facing. A helical transmembrane segment spans residues 252 to 271 (VMILTVFCLSVFALIGLQLF). The Extracellular portion of the chain corresponds to 272 to 366 (MGNLRQKCVL…PNYGYTSYDN (95 aa)). Cys279 and Cys335 are joined by a disulfide. Residues Asn291, Asn304, and Asn337 are each glycosylated (N-linked (GlcNAc...) asparagine). A disulfide bridge connects residues Cys344 and Cys350. An intramembrane region (pore-forming) is located at residues 367-391 (FGWAFLALFRLMTQDFWENLFQLTL). Residues 392–398 (RAAGKTY) lie on the Extracellular side of the membrane. Residues 399 to 419 (MIFFVVIIFLGSFYLINLILA) form a helical membrane-spanning segment. Over 420–568 (VVAMAYAEQN…RIVYLFVMDP (149 aa)) the chain is Cytoplasmic. The interval 455 to 478 (EQKNGMVNGSKTSLSSKKKGDNDQ) is disordered. An II repeat occupies 550-821 (CCIPWVKFKR…QIAISRITRG (272 aa)). The chain crosses the membrane as a helical span at residues 569 to 587 (FVDLGITLCIVLNTVFMAM). The Extracellular portion of the chain corresponds to 588–598 (EHYPMSVHVEE). A helical transmembrane segment spans residues 599 to 618 (VLAIGNLVFTGIFAAEMVLK). Residues 619–632 (LIALDPYYYFQVGW) are Cytoplasmic-facing. A helical transmembrane segment spans residues 633–652 (NIFDSIIVTMSLVELMLADV). The Extracellular segment spans residues 653-654 (EG). The helical transmembrane segment at 655 to 672 (LSVLRSFRLMRVFKLAKS) threads the bilayer. Over 673-688 (WPTLNMLIKIIGNSVG) the chain is Cytoplasmic. Residues 689–707 (ALGNLTLVLAIIVFIFAVV) form a helical membrane-spanning segment. The Extracellular portion of the chain corresponds to 708 to 736 (GMQLFGKSYTDSVCKISSDCELPRWHMAD). Cys721 and Cys727 are joined by a disulfide. An intramembrane region (pore-forming) is located at residues 737–757 (FFHAFLIIFRVLCGEWIETMW). The Extracellular portion of the chain corresponds to 758–768 (DCMEVAGQGMC). Cys759 and Cys768 are disulfide-bonded. A helical membrane pass occupies residues 769-787 (IIVFMMVMVIGNLVVLNLF). At 788 to 973 (LALLLSSFSG…TCFAIVEHSY (186 aa)) the chain is on the cytoplasmic side. Residues 870-928 (PIANGESDDDDGNGSSEDEDDEGRDINMKKKNGDESSTCSTVDKPPEVEDLVEEEEEDL) are disordered. A compositionally biased stretch (acidic residues) spans 875–892 (ESDDDDGNGSSEDEDDEG). Basic and acidic residues predominate over residues 893–903 (RDINMKKKNGD). Acidic residues predominate over residues 917 to 928 (VEDLVEEEEEDL). Residues 954 to 1269 (KGKAWWNFRK…KKYYNAMKKL (316 aa)) form an III repeat. A helical membrane pass occupies residues 974-991 (FETFIIFMILLSSGALAF). Residues 992-1004 (EDIYIEQRRMIKI) are Extracellular-facing. A helical transmembrane segment spans residues 1005 to 1023 (ILEYADQVFTYVFVVEMLL). Residues 1024–1037 (KWVAYGFKVYFTNA) are Cytoplasmic-facing. A helical membrane pass occupies residues 1038–1056 (WCWLDFLIVDVSLISLTAN). The Extracellular segment spans residues 1057 to 1064 (ILGYSELG). The helical transmembrane segment at 1065-1083 (AIKSLRTLRALRPLRALSR) threads the bilayer. At 1084–1101 (FEGMRVVVVNALVGAIPS) the chain is on the cytoplasmic side. Residues 1102-1121 (IFNVLLVCLIFWLIFSIMGV) form a helical membrane-spanning segment. The Extracellular portion of the chain corresponds to 1122–1173 (NLFAGKFYYCFNETSEEVFDHNVVNNKTDCYELMEFHPEVRWMNGKINFDNV). Cysteines 1131 and 1151 form a disulfide. Asn1133 and Asn1147 each carry an N-linked (GlcNAc...) asparagine glycan. Positions 1174 to 1195 (GMGYLALLQVATFKGWMDIMYS) form an intramembrane region, pore-forming. Topologically, residues 1196–1212 (AVDSRAIESQPVYEANL) are extracellular. A helical transmembrane segment spans residues 1213–1234 (YMYIYFVIFIIFGSFFTLNLFI). At 1235 to 1297 (GVIIDNFNQQ…LVFDFVTQQF (63 aa)) the chain is on the cytoplasmic side. The segment at 1253-1255 (IFM) is important for rapid channel inactivation. Residues 1278–1575 (IPRPTNCCQG…WEKFDPTASQ (298 aa)) form an IV repeat. The chain crosses the membrane as a helical span at residues 1298–1315 (FDIFIMVMICLNMVTMMV). At 1316–1326 (ETDDQSAEIEE) the chain is on the extracellular side. A helical membrane pass occupies residues 1327-1345 (ILFYINFAFIILFTGECVL). The Cytoplasmic segment spans residues 1346 to 1357 (KITALRYHYFSI). The chain crosses the membrane as a helical span at residues 1358–1375 (GWNIFDFVVVILSILGIG). Residues 1376–1388 (LADLIEKYFVSPT) are Extracellular-facing. Residues 1389–1405 (LFRVIRLARIGRVLRLI) form a helical membrane-spanning segment. Residues 1406–1424 (RGAKGIRTLLFALMMSLPA) are Cytoplasmic-facing. Residues 1425 to 1442 (LFNIGLLLFLIMFIFSIF) form a helical membrane-spanning segment. At 1443–1464 (GMSNFAYVKKEVGIDDMMNFET) the chain is on the extracellular side. The pore-forming intramembrane region spans 1465–1487 (FGNSIICMFMITTSAGWDGLLAP). The Extracellular segment spans residues 1488–1516 (ILNSPPDCDPDVDNPGSTTRGNCGNAAVG). A disulfide bridge connects residues Cys1495 and Cys1510. The helical transmembrane segment at 1517–1539 (IVFFCSYIVMSFLVVVNMYIAII) threads the bilayer. Residues 1540–1784 (LENFNVATEE…AADNLRESIV (245 aa)) are Cytoplasmic-facing. Residues 1669-1698 (EEVAASTIQRAYRSHILKRCVKQASYMYRD) enclose the IQ domain.

Belongs to the sodium channel (TC 1.A.1.10) family. Nav1.4/SCN4A subfamily. In terms of assembly, voltage-gated sodium (Nav) channels consist of an ion-conducting alpha subunit which is functional on its own associated with regulatory beta subunits. In terms of processing, lacks the cysteine which covalently binds the conotoxin GVIIJ. This cysteine (position 719) is speculated in other sodium channel subunits alpha to be implied in covalent binding with the sodium channel subunit beta-2 or beta-4. In terms of tissue distribution, expressed in skeletal muscle, heart, brain, spinal cord, and eye.

The protein localises to the cell membrane. It carries out the reaction Na(+)(in) = Na(+)(out). Pore-forming subunit of a voltage-gated sodium (Nav) channel that directly mediates the depolarizing phase of action potentials in excitable membranes. Navs, also called VGSCs (voltage-gated sodium channels) or VDSCs (voltage-dependent sodium channels), operate by switching between closed and open conformations depending on the voltage difference across the membrane. In the open conformation they allow Na(+) ions to selectively pass through the pore, along their electrochemical gradient. The influx of Na+ ions provokes membrane depolarization, initiating the propagation of electrical signals throughout cells and tissues. The chain is Sodium channel protein type 4 subunit alpha B (scn4ab) from Danio rerio (Zebrafish).